The chain runs to 173 residues: Bifunctional protein PyrR (173 aa).

The PRPP-binding signature appears at 94–106 (VILIDDVLYTGRT).

Belongs to the purine/pyrimidine phosphoribosyltransferase family. PyrR subfamily. As to quaternary structure, homodimer and homohexamer; in equilibrium.

The enzyme catalyses UMP + diphosphate = 5-phospho-alpha-D-ribose 1-diphosphate + uracil. In terms of biological role, regulates transcriptional attenuation of the pyrimidine nucleotide (pyr) operon by binding in a uridine-dependent manner to specific sites on pyr mRNA. This disrupts an antiterminator hairpin in the RNA and favors formation of a downstream transcription terminator, leading to a reduced expression of downstream genes. Also displays a weak uracil phosphoribosyltransferase activity which is not physiologically significant. In Streptococcus gordonii (strain Challis / ATCC 35105 / BCRC 15272 / CH1 / DL1 / V288), this protein is Bifunctional protein PyrR.